The chain runs to 577 residues: Mitochondrial-processing peptidase subunit alpha (577 aa).

Residues 1 to 35 (MLNRFRPARLVAQSSRCLPLTRARAGPLPVNNART) constitute a mitochondrion transit peptide. The disordered stretch occupies residues 259–301 (SDAPGLSRTGSETSVDSLVSESSEASSESSSSSSDSSESSGGL). Positions 269 to 301 (SETSVDSLVSESSEASSESSSSSSDSSESSGGL) are enriched in low complexity.

The protein belongs to the peptidase M16 family. As to quaternary structure, heterodimer of mpp (alpha) and pep (beta) subunits, forming the mitochondrial processing protease (MPP) in which mpp is involved in substrate recognition and binding and pep is the catalytic subunit.

The protein localises to the mitochondrion matrix. In terms of biological role, substrate recognition and binding subunit of the essential mitochondrial processing protease (MPP), which cleaves the mitochondrial sequence off newly imported precursors proteins. The polypeptide is Mitochondrial-processing peptidase subunit alpha (Neurospora crassa (strain ATCC 24698 / 74-OR23-1A / CBS 708.71 / DSM 1257 / FGSC 987)).